The primary structure comprises 436 residues: Trigger factor (436 aa).

Residues 163-248 (GDRATIDFEG…VKKIEAAHLP (86 aa)) form the PPIase FKBP-type domain.

It belongs to the FKBP-type PPIase family. Tig subfamily.

The protein localises to the cytoplasm. The enzyme catalyses [protein]-peptidylproline (omega=180) = [protein]-peptidylproline (omega=0). Its function is as follows. Involved in protein export. Acts as a chaperone by maintaining the newly synthesized protein in an open conformation. Functions as a peptidyl-prolyl cis-trans isomerase. The protein is Trigger factor of Polaromonas sp. (strain JS666 / ATCC BAA-500).